The primary structure comprises 222 residues: Protein ORM1 (222 aa).

A disordered region spans residues 1–57; the sequence is MTELDYQGTAEAASTSYSRNQTDLKPFPSAGSASSSIKTTEPVKDHRRRRSSSIISH. The Cytoplasmic portion of the chain corresponds to 1–85; the sequence is MTELDYQGTA…NATWVDQRGA (85 aa). Positions 12–23 are enriched in polar residues; sequence AASTSYSRNQTD. 3 positions are modified to phosphoserine: Ser-29, Ser-32, and Ser-56. The helical transmembrane segment at 86–106 threads the bilayer; it reads WIIHVVIIILLKLFYNLFPGV. Residues 107 to 109 are Extracellular-facing; the sequence is TTE. Residues 110 to 130 form a helical membrane-spanning segment; it reads WSWTLTNMTYVIGSYVMFHLI. At 131-162 the chain is on the cytoplasmic side; it reads KGTPFDFNGGAYDNLTMWEQIDDETLYTPSRK. The helical transmembrane segment at 163–183 threads the bilayer; sequence FLISVPIALFLVSTHYAHYDL. A topological domain (extracellular) is located at residue Lys-184. Residues 185–205 traverse the membrane as a helical segment; the sequence is LFSWNCFLTTFGAVVPKLPVT. The Cytoplasmic portion of the chain corresponds to 206-222; the sequence is HRLRISIPGITGRAQIS.

Belongs to the ORM family. As to quaternary structure, component of the SPOTS complex, at least composed of LCB1/2 (LCB1 and/or LCB2), ORM1/2 (ORM1 and/or ORM2), SAC1 and TSC3. Post-translationally, phosphorylated in case of disruption of sphingolipid synthesis. Phosphorylation regulates inhibitory activity of serine palmitoyltransferases (LCB1 and LCB2).

It localises to the endoplasmic reticulum membrane. Its function is as follows. Component of the SPOTS complex that acts as a negative regulator of sphingolipid synthesis. Acts by inhibiting serine palmitoyltransferases (LCB1 and LCB2) activity. Along with ORM2, plays a role in the phosphorylation of LAC1 and YPK1, the distribution of actin patches between mother and daughter cells, and in endocytosis. Disruption or inhibition of sphingolipid synthesis leads to the activation and phosphorylation of YPK1 through the TORC2 and PKH1 pathways, which in turn phosphorylates ORM1 and LAG1 to activate sphingolipid synthesis. This Saccharomyces cerevisiae (strain ATCC 204508 / S288c) (Baker's yeast) protein is Protein ORM1 (ORM1).